The following is a 95-amino-acid chain: MSLVESDFEECLEFFSRPLPELLDGLLASLGEAGNLDSQGQRVEKAALVLELTGTECVREVVFKQEERGRLRGTEGPSRPPSSGAGDPRGATTLG.

Residues 66–95 form a disordered region; the sequence is EERGRLRGTEGPSRPPSSGAGDPRGATTLG.

This sequence belongs to the herpesviridae UL91 family.

This is an uncharacterized protein from Equine herpesvirus 2 (strain 86/87) (EHV-2).